We begin with the raw amino-acid sequence, 78 residues long: Defensin-like protein 281 (78 aa).

An N-terminal signal peptide occupies residues 1-23 (MASTKYLVLLFICLSVLLTPGLG). 3 disulfide bridges follow: Cys-37/Cys-60, Cys-46/Cys-72, and Cys-50/Cys-74.

It belongs to the DEFL family.

The protein localises to the secreted. This Arabidopsis thaliana (Mouse-ear cress) protein is Defensin-like protein 281.